The following is a 56-amino-acid chain: Large ribosomal subunit protein bL32 (56 aa).

Residues 1–16 (MAVQKNRKTRSKRGMR) are compositionally biased toward basic residues. Residues 1-28 (MAVQKNRKTRSKRGMRRSHDALTTAALS) are disordered.

It belongs to the bacterial ribosomal protein bL32 family.

This chain is Large ribosomal subunit protein bL32, found in Vibrio campbellii (strain ATCC BAA-1116).